The primary structure comprises 395 residues: uncharacterized protein (395 aa).

Transmembrane regions (helical) follow at residues 19–39 (IGIA…IAII), 49–69 (VLLI…IYEL), 87–107 (LTWI…AVGG), 137–157 (LVII…PLGT), 172–192 (YINL…FYLI), 206–226 (TINI…SLIA), 252–272 (LIGG…MGMG), 279–299 (LFIM…KILA), 311–331 (GLVF…GSLI), and 359–379 (VLCT…GAVI).

This sequence belongs to the chloride channel (TC 2.A.49) family.

The protein localises to the cell membrane. This is an uncharacterized protein from Methanocaldococcus jannaschii (strain ATCC 43067 / DSM 2661 / JAL-1 / JCM 10045 / NBRC 100440) (Methanococcus jannaschii).